Consider the following 208-residue polypeptide: Mediator of RNA polymerase II transcription subunit 18 (208 aa).

The protein belongs to the Mediator complex subunit 18 family. Component of the Mediator complex.

It localises to the nucleus. Component of the Mediator complex, a coactivator involved in the regulated transcription of nearly all RNA polymerase II-dependent genes. Mediator functions as a bridge to convey information from gene-specific regulatory proteins to the basal RNA polymerase II transcription machinery. Mediator is recruited to promoters by direct interactions with regulatory proteins and serves as a scaffold for the assembly of a functional preinitiation complex with RNA polymerase II and the general transcription factors. The protein is Mediator of RNA polymerase II transcription subunit 18 (med18) of Xenopus tropicalis (Western clawed frog).